Here is a 353-residue protein sequence, read N- to C-terminus: DNA-directed RNA polymerase subunit alpha (353 aa).

The alpha N-terminal domain (alpha-NTD) stretch occupies residues 1-234; it reads MVQEKVRVST…DLFIPFLHTE (234 aa). Positions 266 to 353 are alpha C-terminal domain (alpha-CTD); that stretch reads KKIALKSIFI…LAQSIYSESG (88 aa).

Belongs to the RNA polymerase alpha chain family. In plastids the minimal PEP RNA polymerase catalytic core is composed of four subunits: alpha, beta, beta', and beta''. When a (nuclear-encoded) sigma factor is associated with the core the holoenzyme is formed, which can initiate transcription.

Its subcellular location is the plastid. It localises to the chloroplast. The catalysed reaction is RNA(n) + a ribonucleoside 5'-triphosphate = RNA(n+1) + diphosphate. DNA-dependent RNA polymerase catalyzes the transcription of DNA into RNA using the four ribonucleoside triphosphates as substrates. The protein is DNA-directed RNA polymerase subunit alpha of Panax ginseng (Korean ginseng).